Reading from the N-terminus, the 177-residue chain is Putative pre-16S rRNA nuclease (177 aa).

It belongs to the YqgF nuclease family.

The protein localises to the cytoplasm. In terms of biological role, could be a nuclease involved in processing of the 5'-end of pre-16S rRNA. The chain is Putative pre-16S rRNA nuclease from Psychrobacter arcticus (strain DSM 17307 / VKM B-2377 / 273-4).